Reading from the N-terminus, the 488-residue chain is Pup--protein ligase (488 aa).

E33 is a Mg(2+) binding site. R76 is an ATP binding site. A Mg(2+)-binding site is contributed by Y78. The active-site Proton acceptor is the D80. E86 provides a ligand contact to Mg(2+). The ATP site is built by T89 and W453.

It belongs to the Pup ligase/Pup deamidase family. Pup-conjugating enzyme subfamily.

The enzyme catalyses ATP + [prokaryotic ubiquitin-like protein]-L-glutamate + [protein]-L-lysine = ADP + phosphate + N(6)-([prokaryotic ubiquitin-like protein]-gamma-L-glutamyl)-[protein]-L-lysine.. The protein operates within protein degradation; proteasomal Pup-dependent pathway. It functions in the pathway protein modification; protein pupylation. Its function is as follows. Catalyzes the covalent attachment of the prokaryotic ubiquitin-like protein modifier Pup to the proteasomal substrate proteins, thereby targeting them for proteasomal degradation. This tagging system is termed pupylation. The ligation reaction involves the side-chain carboxylate of the C-terminal glutamate of Pup and the side-chain amino group of a substrate lysine. This is Pup--protein ligase from Bifidobacterium adolescentis (strain ATCC 15703 / DSM 20083 / NCTC 11814 / E194a).